The following is a 658-amino-acid chain: MARLLTSSSALRWGAVSSSQSVGRAYSSGSPDTEYVQRSIVPTMHFQKSLPRLPIPKLEDTIKRYLNAQRPLLDDVQFKKTEQLALNFQNGVGKQLHEELVQQDKQNKHTSYISGPWFDMYLCARESIVLNFNPFISFTPDPRPDYNRQLIRATNMTVSAMRFLKTMRAGYLEPEIFHLNPAKSDTLTFRKLIRFVPSSLSWYGAYMVNAYPLDMSQYFRLFNGTRIPKPNRDELWTDEKGRHLLVLRKGNFYVFDVIDKDGNIVKASEIQAHLQHILSDTTPAPEFPLGYLTSEERNTWAVLRQKLLNNGNQEALAKVDSAVFCLCLDDFPVEDRVSLSHNMLHGSGLNRWFDKSFSIIMTEDGTAAVNFEHSWGDGVAVLRFQNEVFKDSTQRPAISPESCSAPVDSSKAVQRLHFNLDDSLKAAIANAKEKFDTSVNALSIATMEFKKGGKELLKTQKLSPDAVSQLSFQMAFLRQYGKTTATYESCSTAAFKHGRTETVRPASIYTKKCSEAFVMHPSKHSPAELRSMLQDCSKYHGQLTKEAAMGQGFDRHLFALRYLASSKGLSLPEIYQDASYAQINHNVLSTSTLTSPAVQLGGFAPVVPDGFGVGYGVHDDWIGCNVSSYQTRDVRQFVECVHQSLDDIFTVLQDKPIK.

A mitochondrion-targeting transit peptide spans 1–26; the sequence is MARLLTSSSALRWGAVSSSQSVGRAY. Residues 27 to 179 are Mitochondrial matrix-facing; it reads SSGSPDTEYV…GYLEPEIFHL (153 aa). The segment at residues 180–209 is an intramembrane region (note=Mitochondrial inner membrane); sequence NPAKSDTLTFRKLIRFVPSSLSWYGAYMVN. Residues 210–658 lie on the Mitochondrial matrix side of the membrane; it reads AYPLDMSQYF…FTVLQDKPIK (449 aa). H373 acts as the Proton acceptor in catalysis. Residue 453–465 participates in CoA binding; it reads GKELLKTQKLSPD. Residues Y487, S489, and T500 each contribute to the (R)-carnitine site.

This sequence belongs to the carnitine/choline acetyltransferase family.

The protein resides in the mitochondrion inner membrane. It catalyses the reaction (R)-carnitine + hexadecanoyl-CoA = O-hexadecanoyl-(R)-carnitine + CoA. It carries out the reaction octanoyl-CoA + (R)-carnitine = O-octanoyl-(R)-carnitine + CoA. The catalysed reaction is decanoyl-CoA + (R)-carnitine = O-decanoyl-(R)-carnitine + CoA. The enzyme catalyses dodecanoyl-CoA + (R)-carnitine = O-dodecanoyl-R-carnitine + CoA. It catalyses the reaction tetradecanoyl-CoA + (R)-carnitine = O-tetradecanoyl-(R)-carnitine + CoA. It carries out the reaction (R)-carnitine + octadecanoyl-CoA = O-octadecanoyl-(R)-carnitine + CoA. The catalysed reaction is eicosanoyl-CoA + (R)-carnitine = O-eicosanoyl-(R)-carnitine + CoA. The enzyme catalyses (9Z)-tetradecenoyl-CoA + (R)-carnitine = O-(9Z)-tetradecenoyl-(R)-carnitine + CoA. It catalyses the reaction (5Z)-tetradecenoyl-CoA + (R)-carnitine = O-(5Z)-tetradecenoyl-(R)-carnitine + CoA. It carries out the reaction (R)-carnitine + (9Z)-octadecenoyl-CoA = O-(9Z)-octadecenoyl-(R)-carnitine + CoA. The catalysed reaction is 4,8-dimethylnonanoyl-CoA + (R)-carnitine = O-4,8-dimethylnonanoyl-(R)-carnitine + CoA. The protein operates within lipid metabolism; fatty acid beta-oxidation. In terms of biological role, involved in the intramitochondrial synthesis of acylcarnitines from accumulated acyl-CoA metabolites. Reconverts acylcarnitines back into the respective acyl-CoA esters that can then undergo beta-oxidation, an essential step for the mitochondrial uptake of long-chain fatty acids and their subsequent beta-oxidation in the mitochondrion. Active with medium (C8-C12) and long-chain (C14-C18) acyl-CoA esters. In Xenopus tropicalis (Western clawed frog), this protein is Carnitine O-palmitoyltransferase 2, mitochondrial (cpt2).